Reading from the N-terminus, the 265-residue chain is Expansin-like A2 (265 aa).

The signal sequence occupies residues 1–21; sequence MLQGFLFLLSVVLLFSSSAAA. An Expansin-like EG45 domain is found at 42-148; sequence SGACAYGSMA…RRVPCDYGNK (107 aa). Residues N100 and N103 are each glycosylated (N-linked (GlcNAc...) asparagine). One can recognise an Expansin-like CBD domain in the interval 162–244; the sequence is NYLAIKLLYQ…NWEAGKSYDA (83 aa).

This sequence belongs to the expansin family. Expansin-like A subfamily.

It localises to the secreted. The chain is Expansin-like A2 (EXLA2) from Arabidopsis thaliana (Mouse-ear cress).